We begin with the raw amino-acid sequence, 351 residues long: C(7)-cyclitol 7-kinase (351 aa).

This sequence belongs to the ROK (NagC/XylR) family.

The enzyme catalyses valienone + ATP = valienone 7-phosphate + ADP + H(+). It carries out the reaction validone + ATP = validone 7-phosphate + ADP + H(+). Its function is as follows. Involved in the biosynthesis of the antifungal agent validamycin A. Catalyzes the phosphorylation of valienone and validone to their 7-phosphate derivatives. In Streptomyces hygroscopicus subsp. limoneus, this protein is C(7)-cyclitol 7-kinase.